Here is a 270-residue protein sequence, read N- to C-terminus: MSDLHNESIFITGGGSGLGLALVERFIEEGAQVATLELSAAKVASLRQRFGEHILAVEGNVTCYADYQRALDQILTRSGKLDCFIGNAGIWDHNASLVNTPAETLETGFHELFNVNVLGYLLGAKACAPALIASEGSMIFTLSNAAWYPGGGGPLYTASKHAATGLIRQLAYELAPKVRVNGVGPCGMASDLRGPQALGQSETSIMQSLTPEKIAAILPLQFFPQPADFTGPYVMLASRRNNRALSGVMINADAGLAIRGIRHVAAGLDL.

An NAD(+)-binding site is contributed by 10–34; that stretch reads FITGGGSGLGLALVERFIEEGAQVA. Ser143 lines the substrate pocket. Tyr156 functions as the Proton acceptor in the catalytic mechanism.

This sequence belongs to the short-chain dehydrogenases/reductases (SDR) family.

It carries out the reaction 3-(cis-5,6-dihydroxycyclohexa-1,3-dien-1-yl)propanoate + NAD(+) = 3-(2,3-dihydroxyphenyl)propanoate + NADH + H(+). The catalysed reaction is (2E)-3-(cis-5,6-dihydroxycyclohexa-1,3-dien-1-yl)prop-2-enoate + NAD(+) = (2E)-3-(2,3-dihydroxyphenyl)prop-2-enoate + NADH + H(+). It functions in the pathway aromatic compound metabolism; 3-phenylpropanoate degradation. In terms of biological role, converts 3-phenylpropionate-dihydrodiol (PP-dihydrodiol) and cinnamic acid-dihydrodiol (CI-dihydrodiol) into 3-(2,3-dihydroxylphenyl)propanoic acid (DHPP) and 2,3-dihydroxicinnamic acid (DHCI), respectively. This Escherichia coli (strain SMS-3-5 / SECEC) protein is 3-phenylpropionate-dihydrodiol/cinnamic acid-dihydrodiol dehydrogenase.